A 160-amino-acid polypeptide reads, in one-letter code: Cytochrome b6-f complex subunit 4 (160 aa).

A run of 3 helical transmembrane segments spans residues 36–56 (LLYI…GLSV), 95–115 (LLGV…PFIE), and 131–151 (TVFL…TFPI).

Belongs to the cytochrome b family. PetD subfamily. As to quaternary structure, the 4 large subunits of the cytochrome b6-f complex are cytochrome b6, subunit IV (17 kDa polypeptide, petD), cytochrome f and the Rieske protein, while the 4 small subunits are petG, petL, petM and petN. The complex functions as a dimer.

It localises to the plastid. The protein resides in the chloroplast thylakoid membrane. Its function is as follows. Component of the cytochrome b6-f complex, which mediates electron transfer between photosystem II (PSII) and photosystem I (PSI), cyclic electron flow around PSI, and state transitions. The protein is Cytochrome b6-f complex subunit 4 of Stigeoclonium helveticum (Green alga).